The primary structure comprises 440 residues: Argininosuccinate lyase (440 aa).

The protein belongs to the lyase 1 family. Argininosuccinate lyase subfamily.

Its subcellular location is the cytoplasm. The enzyme catalyses 2-(N(omega)-L-arginino)succinate = fumarate + L-arginine. The protein operates within amino-acid biosynthesis; L-arginine biosynthesis; L-arginine from L-ornithine and carbamoyl phosphate: step 3/3. The chain is Argininosuccinate lyase from Clostridium botulinum (strain 657 / Type Ba4).